A 112-amino-acid chain; its full sequence is MALGLNVQEPEETCADQNCPFHGELSVRGQTLNGEVASTDMEKTVVVEREYDVKVPKYDRFMKRRSRVPAHAPDCLDLAVGDTVTIAECRPLSKTKSHVVVGVVADEQDGDA.

This sequence belongs to the universal ribosomal protein uS17 family. As to quaternary structure, part of the 30S ribosomal subunit.

In terms of biological role, one of the primary rRNA binding proteins, it binds specifically to the 5'-end of 16S ribosomal RNA. This Haloarcula marismortui (strain ATCC 43049 / DSM 3752 / JCM 8966 / VKM B-1809) (Halobacterium marismortui) protein is Small ribosomal subunit protein uS17.